The primary structure comprises 139 residues: Aspartate 1-decarboxylase (139 aa).

The Schiff-base intermediate with substrate; via pyruvic acid role is filled by Ser25. Ser25 carries the post-translational modification Pyruvic acid (Ser). Position 57 (Thr57) interacts with substrate. The active-site Proton donor is Tyr58. Residue 73–75 (GAA) participates in substrate binding. The tract at residues 116-139 (ELGSDPAHAPEGSGLTSPRSLTFA) is disordered. Over residues 129–139 (GLTSPRSLTFA) the composition is skewed to polar residues.

It belongs to the PanD family. In terms of assembly, heterooctamer of four alpha and four beta subunits. Pyruvate is required as a cofactor. In terms of processing, is synthesized initially as an inactive proenzyme, which is activated by self-cleavage at a specific serine bond to produce a beta-subunit with a hydroxyl group at its C-terminus and an alpha-subunit with a pyruvoyl group at its N-terminus.

Its subcellular location is the cytoplasm. The enzyme catalyses L-aspartate + H(+) = beta-alanine + CO2. The protein operates within cofactor biosynthesis; (R)-pantothenate biosynthesis; beta-alanine from L-aspartate: step 1/1. In terms of biological role, catalyzes the pyruvoyl-dependent decarboxylation of aspartate to produce beta-alanine. This Nocardia farcinica (strain IFM 10152) protein is Aspartate 1-decarboxylase.